Reading from the N-terminus, the 176-residue chain is PRL-1 phosphatase (176 aa).

The Tyrosine-protein phosphatase domain occupies 13–166 (APALIEYKGM…YKPKARLKHK (154 aa)). The Phosphocysteine intermediate role is filled by Cys109. At Cys173 the chain carries Cysteine methyl ester. Cys173 is lipidated: S-farnesyl cysteine. Residues 174–176 (SVQ) constitute a propeptide, removed in mature form.

It belongs to the protein-tyrosine phosphatase family. In terms of assembly, homotrimer. Interacts with uex, possibly at the plasma membrane. As to expression, expressed in the adult head (at protein level). Expressed in neurons in the antennal lobe and V-glomeruli (at protein level). Expressed in dorsocentral neurons (at protein level).

Its subcellular location is the cytoplasm. It is found in the cell membrane. The protein resides in the apicolateral cell membrane. The protein localises to the cell projection. It localises to the axon. It catalyses the reaction O-phospho-L-tyrosyl-[protein] + H2O = L-tyrosyl-[protein] + phosphate. Its function is as follows. Probable phosphatase. Inhibits growth possibly by negatively regulating Src64B-induced growth. Regulates central nervous system circuit formation and stabilization of synapse-dense terminal arbors. In dorsocentral neurons, regulates synaptogenesis in terminal arbors via modulation of the insulin receptor pathway, likely upstream of Akt1, and via reduction of PtdIns(4,5)P2 (Phosphatidylinositol 4,5-bisphosphate) levels. In the nervous system, plays a protective role together with uex in response to olfactory carbon dioxide stimulation. This Drosophila melanogaster (Fruit fly) protein is PRL-1 phosphatase.